The sequence spans 388 residues: Dipeptidase verJ (388 aa).

Zn(2+) contacts are provided by His29, Asp31, and Glu142. Residues His169, Arg243, and Asp300 each contribute to the substrate site.

It belongs to the metallo-dependent hydrolases superfamily. Peptidase M19 family. Requires Zn(2+) as cofactor.

The catalysed reaction is an L-aminoacyl-L-amino acid + H2O = 2 an L-alpha-amino acid. The protein operates within mycotoxin biosynthesis. Its function is as follows. Dipeptidase; part of the gene cluster that mediates the biosynthesis of 11'-deoxyverticillin A, one of the dimeric epipolythiodioxopiperazines (ETPs) from the verticillin family that act as mycotoxins. 11'-deoxyverticillin A is required for normal conidiation. The nonribosomal peptide synthetase verP is speculated to be responsible for condensation of amino acids to form the carbon skeleton of verticillin, whereas the cluster-specific tailoring enzymes are involved in further modifications leading to the production of 11'-deoxyverticillin A. The sequence is that of Dipeptidase verJ from Clonostachys rogersoniana.